The chain runs to 254 residues: MPQQIELRNIALQAAQPLVHGVSLTLQRGRVLALVGGSGSGKSLTCAATLGILPAGVRQTAGEILADGKAVYPCALRGIKIATIMQNPRSAFNPLHTMHTHARETCLALGKPADDATLTAAIEAVGLENAARVLKLYPFEMSGGMLQRMMIAMAVLCESPFIIADEPTTDLDVVAQARILDLLESIMQKQAPGMLLVTHDMGVVARLADDVAVMSQGKIVEQGDVETLFNAPKHAVTRSLVSAHLALYGMELAS.

The region spanning 2-241 (PQQIELRNIA…PKHAVTRSLV (240 aa)) is the ABC transporter domain. 36 to 43 (GGSGSGKS) contacts ATP.

It belongs to the ABC transporter superfamily. Nickel importer (TC 3.A.1.5.3) family. As to quaternary structure, the complex is composed of two ATP-binding proteins (NikD and NikE), two transmembrane proteins (NikB and NikC) and a solute-binding protein (NikA).

The protein resides in the cell inner membrane. The enzyme catalyses Ni(2+)(out) + ATP + H2O = Ni(2+)(in) + ADP + phosphate + H(+). In terms of biological role, part of the ABC transporter complex NikABCDE involved in nickel import. Responsible for energy coupling to the transport system. This chain is Nickel import ATP-binding protein NikD, found in Shigella sonnei (strain Ss046).